A 122-amino-acid chain; its full sequence is MASVYENSYMIVLIFLLLGILLPVVALTLGRMLRPNKPSAAKATTYESGIEPFHDANIRFHARYYIFALLFVIFDVETLFLYPWAVAYDDLGLFALIEMLIFVVMLLVGLAYAWKKKVLQWL.

The next 3 membrane-spanning stretches (helical) occupy residues 10 to 30 (MIVL…LTLG), 66 to 86 (IFAL…PWAV), and 91 to 111 (LGLF…VGLA).

It belongs to the complex I subunit 3 family. As to quaternary structure, NDH-1 is composed of 14 different subunits. Subunits NuoA, H, J, K, L, M, N constitute the membrane sector of the complex.

It is found in the cell membrane. The enzyme catalyses a quinone + NADH + 5 H(+)(in) = a quinol + NAD(+) + 4 H(+)(out). NDH-1 shuttles electrons from NADH, via FMN and iron-sulfur (Fe-S) centers, to quinones in the respiratory chain. The immediate electron acceptor for the enzyme in this species is believed to be a menaquinone. Couples the redox reaction to proton translocation (for every two electrons transferred, four hydrogen ions are translocated across the cytoplasmic membrane), and thus conserves the redox energy in a proton gradient. The protein is NADH-quinone oxidoreductase subunit A of Bacillus thuringiensis subsp. konkukian (strain 97-27).